We begin with the raw amino-acid sequence, 231 residues long: Large ribosomal subunit protein uL1 (231 aa).

Belongs to the universal ribosomal protein uL1 family. Part of the 50S ribosomal subunit.

Functionally, binds directly to 23S rRNA. The L1 stalk is quite mobile in the ribosome, and is involved in E site tRNA release. Its function is as follows. Protein L1 is also a translational repressor protein, it controls the translation of the L11 operon by binding to its mRNA. The chain is Large ribosomal subunit protein uL1 from Teredinibacter turnerae (strain ATCC 39867 / T7901).